We begin with the raw amino-acid sequence, 201 residues long: Small ribosomal subunit protein uS4 (201 aa).

One can recognise an S4 RNA-binding domain in the interval 91-151; it reads ARLDNVIYRA…DRSRSMLWFD (61 aa).

It belongs to the universal ribosomal protein uS4 family. As to quaternary structure, part of the 30S ribosomal subunit. Contacts protein S5. The interaction surface between S4 and S5 is involved in control of translational fidelity.

In terms of biological role, one of the primary rRNA binding proteins, it binds directly to 16S rRNA where it nucleates assembly of the body of the 30S subunit. With S5 and S12 plays an important role in translational accuracy. This Corynebacterium urealyticum (strain ATCC 43042 / DSM 7109) protein is Small ribosomal subunit protein uS4.